The following is a 474-amino-acid chain: ATP synthase subunit beta 2 (474 aa).

153-160 (GGAGVGKT) serves as a coordination point for ATP.

It belongs to the ATPase alpha/beta chains family. In terms of assembly, F-type ATPases have 2 components, CF(1) - the catalytic core - and CF(0) - the membrane proton channel. CF(1) has five subunits: alpha(3), beta(3), gamma(1), delta(1), epsilon(1). CF(0) has three main subunits: a(1), b(2) and c(9-12). The alpha and beta chains form an alternating ring which encloses part of the gamma chain. CF(1) is attached to CF(0) by a central stalk formed by the gamma and epsilon chains, while a peripheral stalk is formed by the delta and b chains.

The protein resides in the cell inner membrane. The enzyme catalyses ATP + H2O + 4 H(+)(in) = ADP + phosphate + 5 H(+)(out). Produces ATP from ADP in the presence of a proton gradient across the membrane. The catalytic sites are hosted primarily by the beta subunits. The sequence is that of ATP synthase subunit beta 2 from Syntrophotalea carbinolica (strain DSM 2380 / NBRC 103641 / GraBd1) (Pelobacter carbinolicus).